We begin with the raw amino-acid sequence, 59 residues long: MAVPKKKTSKGKRNQRHATWKGKAAVAAEKALSIGKSVLTGRAQGFVYPMNETSEEEAD.

Basic residues predominate over residues 1–20 (MAVPKKKTSKGKRNQRHATW). A disordered region spans residues 1–22 (MAVPKKKTSKGKRNQRHATWKG).

Belongs to the bacterial ribosomal protein bL32 family.

The chain is Large ribosomal subunit protein bL32 from Prochlorococcus marinus (strain NATL1A).